A 428-amino-acid polypeptide reads, in one-letter code: MSVKWEKLEGNEGVLTVEVDAEKVNKGLDAAFKKVVKNITLPGFRKGKVPRVLFEKRFGVEALYQDALDILLPEAYAKAVEEAGIEPVSMPEIDIEQMEKGKSLIFKAKVTVKPEVKLGQYKGLEVEKMDTTVTDEDVENELKRLQEDYAELVVKEDGTVENGDTVVIDFEGFVDGEPFEGGKAENYSLEIGSGTFIPGFEEQLVGMKAGEEKEIQVTFPDEYHAKQLAGKPATFKVKVHEVKAKQLPALDDEFAKDVDEEVETLDELKAKIRARLEEAKKNEAETALRNAVVEKAAANAEMDIPEVMIKNETDRMLREFDQRLQMQGLNLQLYYQFSGQDEASLREQMKEDAEKRVRAALTLEAIAKAENIEVTDEEVNKELEKMAEAYKLSVDKLKELLGSLDGVKEDLKWRKTVDFLVEHSKVAA.

Residues 163 to 248 (GDTVVIDFEG…VHEVKAKQLP (86 aa)) enclose the PPIase FKBP-type domain.

This sequence belongs to the FKBP-type PPIase family. Tig subfamily.

The protein localises to the cytoplasm. It carries out the reaction [protein]-peptidylproline (omega=180) = [protein]-peptidylproline (omega=0). In terms of biological role, involved in protein export. Acts as a chaperone by maintaining the newly synthesized protein in an open conformation. Functions as a peptidyl-prolyl cis-trans isomerase. The polypeptide is Trigger factor (Geobacillus kaustophilus (strain HTA426)).